A 442-amino-acid polypeptide reads, in one-letter code: Trigger factor (442 aa).

The PPIase FKBP-type domain occupies 176 to 259 (GDFISLSLYV…VNAVIEISSP (84 aa)).

It belongs to the FKBP-type PPIase family. Tig subfamily.

It localises to the cytoplasm. It catalyses the reaction [protein]-peptidylproline (omega=180) = [protein]-peptidylproline (omega=0). In terms of biological role, involved in protein export. Acts as a chaperone by maintaining the newly synthesized protein in an open conformation. Functions as a peptidyl-prolyl cis-trans isomerase. This is Trigger factor (tig) from Chlamydia trachomatis serovar D (strain ATCC VR-885 / DSM 19411 / UW-3/Cx).